The chain runs to 73 residues: Putative ORF9c protein (73 aa).

A helical transmembrane segment spans residues 47–67; that stretch reads AAVGELLLLEWLAMAVMLLLL.

The protein localises to the membrane. Functionally, may induce apoptosis in cardiomyocytes when overexpressed ex-vivo. This Homo sapiens (Human) protein is Putative ORF9c protein.